Consider the following 325-residue polypeptide: NADH-quinone oxidoreductase subunit H (325 aa).

8 helical membrane passes run 11–31 (ILIS…CGAF), 81–101 (AIFT…FAIV), 114–134 (IGIL…LFAG), 154–174 (LSYE…VGSF), 186–206 (VWNV…GVAV), 237–257 (FFVG…TLFF), 265–285 (LPPF…FILI), and 304–324 (VCLP…LYNA).

This sequence belongs to the complex I subunit 1 family. NDH-1 is composed of 13 different subunits. Subunits NuoA, H, J, K, L, M, N constitute the membrane sector of the complex.

The protein localises to the cell inner membrane. The catalysed reaction is a quinone + NADH + 5 H(+)(in) = a quinol + NAD(+) + 4 H(+)(out). Functionally, NDH-1 shuttles electrons from NADH, via FMN and iron-sulfur (Fe-S) centers, to quinones in the respiratory chain. The immediate electron acceptor for the enzyme in this species is believed to be ubiquinone. Couples the redox reaction to proton translocation (for every two electrons transferred, four hydrogen ions are translocated across the cytoplasmic membrane), and thus conserves the redox energy in a proton gradient. This subunit may bind ubiquinone. In Yersinia pseudotuberculosis serotype O:3 (strain YPIII), this protein is NADH-quinone oxidoreductase subunit H.